A 289-amino-acid chain; its full sequence is uncharacterized protein (289 aa).

This is an uncharacterized protein from Archaeoglobus fulgidus (strain ATCC 49558 / DSM 4304 / JCM 9628 / NBRC 100126 / VC-16).